The primary structure comprises 268 residues: Aliphatic sulfonates import ATP-binding protein SsuB 3 (268 aa).

Positions Met1–Gly27 are disordered. The segment covering Pro13 to Thr26 has biased composition (basic and acidic residues). The region spanning Val32–Tyr247 is the ABC transporter domain. Residue Gly64–Thr71 coordinates ATP.

It belongs to the ABC transporter superfamily. Aliphatic sulfonates importer (TC 3.A.1.17.2) family. In terms of assembly, the complex is composed of two ATP-binding proteins (SsuB), two transmembrane proteins (SsuC) and a solute-binding protein (SsuA).

The protein localises to the cell membrane. The catalysed reaction is ATP + H2O + aliphatic sulfonate-[sulfonate-binding protein]Side 1 = ADP + phosphate + aliphatic sulfonateSide 2 + [sulfonate-binding protein]Side 1.. Its function is as follows. Part of the ABC transporter complex SsuABC involved in aliphatic sulfonates import. Responsible for energy coupling to the transport system. The sequence is that of Aliphatic sulfonates import ATP-binding protein SsuB 3 from Rhodococcus jostii (strain RHA1).